Here is a 255-residue protein sequence, read N- to C-terminus: Small ribosomal subunit protein uS2 (255 aa).

The protein belongs to the universal ribosomal protein uS2 family.

The polypeptide is Small ribosomal subunit protein uS2 (rpsB) (Streptococcus pyogenes serotype M1).